A 278-amino-acid chain; its full sequence is E3 ubiquitin-protein ligase CHIP (278 aa).

TPR repeat units follow at residues Ala10–Val43, Ala45–Ser77, and Val78–Ser111. A coiled-coil region spans residues Glu143–Glu194. Residues Glu199–Ala273 enclose the U-box domain.

In terms of assembly, interacts with HSC70-4, PP2AA1, PP2AA3 and PP2A5, as well as with UBC8, UBC9 and UBC10. Also interacts with the chloroplastic proteolytic subunits ClpP4, FtsH1 and FtsH2.

The catalysed reaction is S-ubiquitinyl-[E2 ubiquitin-conjugating enzyme]-L-cysteine + [acceptor protein]-L-lysine = [E2 ubiquitin-conjugating enzyme]-L-cysteine + N(6)-ubiquitinyl-[acceptor protein]-L-lysine.. It functions in the pathway protein modification; protein ubiquitination. Has E3 ubiquitin-protein ligase activity and may target misfolded substrates towards proteasomal degradation. Regulates the activity of some serine/threonine-protein phosphatases by E3 ubiquitin-protein ligase activity. Required for responses to biotic and abiotic stresses such as auxin, abscisic acid (ABA), low and high temperature and darkness, probably through the activation of serine/threonine-protein phosphatase and the subsequent modification of the plasma membrane composition. Regulates the chloroplastic Clp proteolytic activity in response to stresses. Ubiquitylates FtsH1, a component of the chloroplast FtsH protease, and affects protein degradation in chloroplasts. Mediates plastid precursor degradation to prevent cytosolic precursor accumulation, together with the molecular chaperone HSC70-4. Mediates ubiquitination of transit peptides and thereby led to their degradation through the ubiquitin-proteasome system. The polypeptide is E3 ubiquitin-protein ligase CHIP (Arabidopsis thaliana (Mouse-ear cress)).